The following is a 146-amino-acid chain: Protein PBDC1 homolog (146 aa).

Belongs to the PBDC1 family.

The protein resides in the cytoplasm. The protein is Protein PBDC1 homolog of Saccharomyces cerevisiae (strain ATCC 204508 / S288c) (Baker's yeast).